The chain runs to 426 residues: LIM/homeobox protein Lhx2 (426 aa).

The segment covering 14 to 24 (VIDEMDRRQER) has biased composition (basic and acidic residues). Residues 14 to 42 (VIDEMDRRQERGSGISSAIDRGDTETTMP) are disordered. LIM zinc-binding domains lie at 52-104 (CAGC…CKED) and 114-167 (CARC…CRLH). Residues 248-268 (DAEHLDRDQPYPSSQKTKRMR) are disordered. A DNA-binding region (homeobox) is located at residues 264–323 (TKRMRTSFKHHQLRTMKSYFAINHNPDAKDLKQLAQKTGLTKRVLQVWFQNARAKFRRNL). The Nuclear localization signal signature appears at 305–321 (KRVLQVWFQNARAKFRR). Positions 326-354 (QENTGVDKTSDATLQTGTPSGPASELSNA) are enriched in polar residues. The segment at 326-370 (QENTGVDKTSDATLQTGTPSGPASELSNASLSPSSTPTTLTDLTS) is disordered. Residues 355–370 (SLSPSSTPTTLTDLTS) show a composition bias toward low complexity.

In terms of assembly, interacts (via LIM domains) with CITED2. Interacts with POU4F2. In terms of tissue distribution, found in discrete regions of the developing CNS, primarily in diencephalic and telencephalic structures and a subset of lymphoid tissues. Also found in embryonic spinal cord and fetal liver.

The protein resides in the nucleus. In terms of biological role, acts as a transcriptional activator. Stimulates the promoter of the alpha-glycoprotein gene. Transcriptional regulatory protein involved in the control of cell differentiation in developing lymphoid and neural cell types. The chain is LIM/homeobox protein Lhx2 (Lhx2) from Rattus norvegicus (Rat).